The chain runs to 230 residues: Probable C4-dicarboxylate response regulator DctR (230 aa).

The region spanning 8–124 (RVLLIEDDPM…RLKAALTQYE (117 aa)) is the Response regulatory domain. Aspartate 59 is modified (4-aspartylphosphate). The segment at residues 183-209 (EEIGRDVGLARVTVRRYLNYLESVGQV) is a DNA-binding region (H-T-H motif).

Post-translationally, phosphorylated by DctS.

The protein localises to the cytoplasm. Functionally, member of the two-component regulatory system DctS/DctR. Essential for expression of DctP. In Halalkalibacterium halodurans (strain ATCC BAA-125 / DSM 18197 / FERM 7344 / JCM 9153 / C-125) (Bacillus halodurans), this protein is Probable C4-dicarboxylate response regulator DctR (dctR).